Here is a 296-residue protein sequence, read N- to C-terminus: mRNA export factor rsm1 (296 aa).

Residues 40-174 (PWSREEFLRR…VSTHLPEEMT (135 aa)) form a C3HC-type zinc finger.

Its subcellular location is the cytoplasm. It is found in the nucleus. In terms of biological role, involved in the export of mRNA from the nucleus to the cytoplasm. This chain is mRNA export factor rsm1 (rsm1), found in Schizosaccharomyces pombe (strain 972 / ATCC 24843) (Fission yeast).